Here is a 155-residue protein sequence, read N- to C-terminus: Small ribosomal subunit protein uS7cz/uS7cy (155 aa).

This sequence belongs to the universal ribosomal protein uS7 family. In terms of assembly, part of the 30S ribosomal subunit.

The protein localises to the plastid. It is found in the chloroplast. Its function is as follows. One of the primary rRNA binding proteins, it binds directly to 16S rRNA where it nucleates assembly of the head domain of the 30S subunit. This is Small ribosomal subunit protein uS7cz/uS7cy (rps7-A) from Populus trichocarpa (Western balsam poplar).